A 943-amino-acid polypeptide reads, in one-letter code: Synaptotagmin-like protein 2 (943 aa).

Positions 1 to 57 (MIDLSFLTEEEQEAIMKVLQRDAALKRAEEERVRHLPEKVKDDQQLKNMSGQWFYEA) constitute a RabBD domain. Disordered stretches follow at residues 77–99 (RKKR…KESW), 118–291 (EEPE…VRFH), and 361–613 (ESDR…SNSG). Basic and acidic residues predominate over residues 82–99 (QVADEQSKDRANRAKESW). Positions 125–138 (APASPSSSVVNPVS) are enriched in low complexity. Residues 174–192 (SQQTKNEQSKNGKTGLFQT) are compositionally biased toward polar residues. Positions 194 to 205 (KEGELSESKEES) are enriched in basic and acidic residues. 3 stretches are compositionally biased toward polar residues: residues 382–394 (PQPS…LPFQ), 404–416 (KNET…SGSF), and 426–440 (EFLT…NSHT). A compositionally biased stretch (basic and acidic residues) spans 524–537 (ELVRSAEDDQKADQ). Residues 549–560 (STVSSQPDNQFS) are compositionally biased toward polar residues. Over residues 603–613 (SSLTNLSSNSG) the composition is skewed to low complexity. C2 domains lie at 637–762 (VKGS…LKWY) and 777–906 (NRGE…VDWM).

In terms of assembly, monomer. Binds NRXN1. Binds RAB27A that has been activated by GTP-binding via its N-terminus. Interacts with RAB27B.

It is found in the cell membrane. May act as a RAB27A effector protein and play a role in cytotoxic granule exocytosis in lymphocytes. This chain is Synaptotagmin-like protein 2 (SYTL2), found in Bos taurus (Bovine).